The primary structure comprises 399 residues: MMRASYLFTSESVSEGHPDKVCDRISDEIVDLFYREGPKAGIDPWQIRAACETLATTNKVVIAGETRGPASVTNEHIEHVVREAIKDIGYEQAGFHWKTCDIEILLHPQSADIAQGVDALQPGEVKEEGAGDQGIMFGYACNETPDLMPAPIFYAHKILRLIAEARHSGVEKVLGPDSKSQVTVRYENGKPVGVREIVVSHQHLVEDMTSAQVRERVEPYVREALPKDWITKDTIWHINPTGKFFIGGPDGDTGLTGRKIIVDTYGGAAPHGGGAFSGKDPTKVDRSAAYAARYLAKNIVAAGLADRCTLQLAYAIGVARPLSIYIDTHGTGKVSEDKLEKAAAEVMNLTPRGIRSHLDLNRPIYARTAAYGHFGRTPDNEGGFSWEKTDLAEAFKRAV.

Histidine 17 serves as a coordination point for ATP. Residue aspartate 19 participates in Mg(2+) binding. Residue glutamate 52 coordinates K(+). Glutamate 65 and glutamine 109 together coordinate L-methionine. Residues 109–119 (QSADIAQGVDA) are flexible loop. ATP contacts are provided by residues 177–179 (DSK), 243–244 (KF), aspartate 252, 258–259 (RK), alanine 275, and lysine 279. Aspartate 252 contacts L-methionine. Residue lysine 283 participates in L-methionine binding.

The protein belongs to the AdoMet synthase family. Homotetramer; dimer of dimers. Mg(2+) serves as cofactor. K(+) is required as a cofactor.

It localises to the cytoplasm. The enzyme catalyses L-methionine + ATP + H2O = S-adenosyl-L-methionine + phosphate + diphosphate. The protein operates within amino-acid biosynthesis; S-adenosyl-L-methionine biosynthesis; S-adenosyl-L-methionine from L-methionine: step 1/1. Functionally, catalyzes the formation of S-adenosylmethionine (AdoMet) from methionine and ATP. The overall synthetic reaction is composed of two sequential steps, AdoMet formation and the subsequent tripolyphosphate hydrolysis which occurs prior to release of AdoMet from the enzyme. The sequence is that of S-adenosylmethionine synthase from Bradyrhizobium sp. (strain BTAi1 / ATCC BAA-1182).